The sequence spans 85 residues: Sec-independent protein translocase protein TatA (85 aa).

A helical membrane pass occupies residues 1-21 (MGGISIWQLLIIALIVVLLFG). The tract at residues 43–85 (MSSDEDKKALEDAEAAKSVQTAQTAQPTQQATEKKPESNKEQA) is disordered. Basic and acidic residues predominate over residues 46-57 (DEDKKALEDAEA). A compositionally biased stretch (low complexity) spans 58–73 (AKSVQTAQTAQPTQQA). The span at 74–85 (TEKKPESNKEQA) shows a compositional bias: basic and acidic residues.

It belongs to the TatA/E family. In terms of assembly, the Tat system comprises two distinct complexes: a TatABC complex, containing multiple copies of TatA, TatB and TatC subunits, and a separate TatA complex, containing only TatA subunits. Substrates initially bind to the TatABC complex, which probably triggers association of the separate TatA complex to form the active translocon.

It localises to the cell inner membrane. In terms of biological role, part of the twin-arginine translocation (Tat) system that transports large folded proteins containing a characteristic twin-arginine motif in their signal peptide across membranes. TatA could form the protein-conducting channel of the Tat system. The protein is Sec-independent protein translocase protein TatA of Shewanella sp. (strain ANA-3).